Consider the following 975-residue polypeptide: Glycine dehydrogenase (decarboxylating) (975 aa).

N6-(pyridoxal phosphate)lysine is present on lysine 723.

Belongs to the GcvP family. As to quaternary structure, the glycine cleavage system is composed of four proteins: P, T, L and H. Requires pyridoxal 5'-phosphate as cofactor.

It catalyses the reaction N(6)-[(R)-lipoyl]-L-lysyl-[glycine-cleavage complex H protein] + glycine + H(+) = N(6)-[(R)-S(8)-aminomethyldihydrolipoyl]-L-lysyl-[glycine-cleavage complex H protein] + CO2. The glycine cleavage system catalyzes the degradation of glycine. The P protein binds the alpha-amino group of glycine through its pyridoxal phosphate cofactor; CO(2) is released and the remaining methylamine moiety is then transferred to the lipoamide cofactor of the H protein. This Burkholderia vietnamiensis (strain G4 / LMG 22486) (Burkholderia cepacia (strain R1808)) protein is Glycine dehydrogenase (decarboxylating).